A 90-amino-acid polypeptide reads, in one-letter code: Putative toxin RelE1 (90 aa).

Belongs to the RelE toxin family.

Its function is as follows. Toxic component of a type II toxin-antitoxin (TA) system. Its cognate antitoxin is RelB1 (Potential). This Methanocaldococcus jannaschii (strain ATCC 43067 / DSM 2661 / JAL-1 / JCM 10045 / NBRC 100440) (Methanococcus jannaschii) protein is Putative toxin RelE1 (relE1).